We begin with the raw amino-acid sequence, 213 residues long: Probable GTP-binding protein EngB (213 aa).

In terms of domain architecture, EngB-type G spans 30 to 204 (EGFEVAFAGR…YTALAGWMEL (175 aa)). Residues 38 to 45 (GRSNAGKS), 64 to 68 (GRTQL), 82 to 85 (DLPG), 149 to 152 (TKAD), and 182 to 185 (LFSA) contribute to the GTP site. The Mg(2+) site is built by serine 45 and threonine 66.

The protein belongs to the TRAFAC class TrmE-Era-EngA-EngB-Septin-like GTPase superfamily. EngB GTPase family. Mg(2+) serves as cofactor.

Necessary for normal cell division and for the maintenance of normal septation. The sequence is that of Probable GTP-binding protein EngB from Pseudomonas fluorescens (strain SBW25).